We begin with the raw amino-acid sequence, 660 residues long: Probable rhamnogalacturonate lyase B (660 aa).

The signal sequence occupies residues 1–20; that stretch reads MRLSVSLGLASLWTAIGATA. 11 N-linked (GlcNAc...) asparagine glycosylation sites follow: Asn22, Asn27, Asn109, Asn142, Asn238, Asn284, Asn432, Asn492, Asn532, Asn594, and Asn635.

It belongs to the polysaccharide lyase 4 family.

Its subcellular location is the secreted. The enzyme catalyses Endotype eliminative cleavage of L-alpha-rhamnopyranosyl-(1-&gt;4)-alpha-D-galactopyranosyluronic acid bonds of rhamnogalacturonan I domains in ramified hairy regions of pectin leaving L-rhamnopyranose at the reducing end and 4-deoxy-4,5-unsaturated D-galactopyranosyluronic acid at the non-reducing end.. Functionally, pectinolytic enzymes consist of four classes of enzymes: pectin lyase, polygalacturonase, pectin methylesterase and rhamnogalacturonase. Degrades the rhamnogalacturonan I (RG-I) backbone of pectin. The sequence is that of Probable rhamnogalacturonate lyase B (rglB) from Aspergillus terreus (strain NIH 2624 / FGSC A1156).